Consider the following 364-residue polypeptide: L-carnitine dehydrogenase (364 aa).

11–16 (GGGVIG) serves as a coordination point for NAD(+). Positions 336–364 (KPAASTAAEKAKASKPVKKAEKPKKKKKG) are disordered. The span at 348–364 (ASKPVKKAEKPKKKKKG) shows a compositional bias: basic residues.

Belongs to the 3-hydroxyacyl-CoA dehydrogenase family. L-carnitine dehydrogenase subfamily. In terms of assembly, homodimer.

Its subcellular location is the cytoplasm. The enzyme catalyses carnitine + NAD(+) = 3-dehydrocarnitine + NADH + H(+). It participates in amine and polyamine metabolism; carnitine metabolism. Catalyzes the NAD(+)-dependent oxidation of L-carnitine to 3-dehydrocarnitine. The polypeptide is L-carnitine dehydrogenase (Mesorhizobium japonicum (strain LMG 29417 / CECT 9101 / MAFF 303099) (Mesorhizobium loti (strain MAFF 303099))).